A 1047-amino-acid polypeptide reads, in one-letter code: Ubiquitin carboxyl-terminal hydrolase 48 (1047 aa).

In terms of domain architecture, USP spans 89 to 416 (VGLTNLGATC…NAYMLVYKQQ (328 aa)). Cys-98 serves as the catalytic Nucleophile. Catalysis depends on His-348, which acts as the Proton acceptor. DUSP domains follow at residues 457–551 (QSVD…RSSL), 567–697 (NQLN…DHDP), and 717–830 (MMAN…RIHD). Residues 609–647 (LEEDEEETKHNNSKINGEKSSPGTKADGVKGDSEDGDGE) form a disordered region. Positions 621 to 631 (SKINGEKSSPG) are enriched in polar residues. Positions 635–647 (DGVKGDSEDGDGE) are enriched in basic and acidic residues. Residues 887-928 (PEFSVSGSDVEDEKEEPKLDGEKDPDFSQTEGGAKRQKLNDT) form a disordered region. The segment covering 901-912 (EEPKLDGEKDPD) has biased composition (basic and acidic residues). The Ubiquitin-like domain maps to 961-1012 (VSANQTLKDLKIQIMHAFSVAPFDQNLSIDGRCLKDDSATLGSLGVIPESII).

It belongs to the peptidase C19 family.

It localises to the cytoplasm. The protein localises to the nucleus. It catalyses the reaction Thiol-dependent hydrolysis of ester, thioester, amide, peptide and isopeptide bonds formed by the C-terminal Gly of ubiquitin (a 76-residue protein attached to proteins as an intracellular targeting signal).. Its function is as follows. Recognizes and hydrolyzes the peptide bond at the C-terminal Gly of ubiquitin. Involved in the processing of poly-ubiquitin precursors as well as that of ubiquitinated proteins. The polypeptide is Ubiquitin carboxyl-terminal hydrolase 48 (usp48) (Danio rerio (Zebrafish)).